Consider the following 138-residue polypeptide: Phosphoribosyl-AMP cyclohydrolase (138 aa).

Position 84 (Asp84) interacts with Mg(2+). Cys85 provides a ligand contact to Zn(2+). The Mg(2+) site is built by Asp86 and Asp88. 2 residues coordinate Zn(2+): Cys102 and Cys109.

This sequence belongs to the PRA-CH family. In terms of assembly, homodimer. It depends on Mg(2+) as a cofactor. Requires Zn(2+) as cofactor.

It is found in the cytoplasm. It carries out the reaction 1-(5-phospho-beta-D-ribosyl)-5'-AMP + H2O = 1-(5-phospho-beta-D-ribosyl)-5-[(5-phospho-beta-D-ribosylamino)methylideneamino]imidazole-4-carboxamide. It functions in the pathway amino-acid biosynthesis; L-histidine biosynthesis; L-histidine from 5-phospho-alpha-D-ribose 1-diphosphate: step 3/9. In terms of biological role, catalyzes the hydrolysis of the adenine ring of phosphoribosyl-AMP. The polypeptide is Phosphoribosyl-AMP cyclohydrolase (Burkholderia lata (strain ATCC 17760 / DSM 23089 / LMG 22485 / NCIMB 9086 / R18194 / 383)).